We begin with the raw amino-acid sequence, 79 residues long: Translational regulator CsrA (79 aa).

This sequence belongs to the CsrA/RsmA family. As to quaternary structure, homodimer; the beta-strands of each monomer intercalate to form a hydrophobic core, while the alpha-helices form wings that extend away from the core.

It is found in the cytoplasm. In terms of biological role, a translational regulator that binds mRNA to regulate translation initiation and/or mRNA stability. Usually binds in the 5'-UTR at or near the Shine-Dalgarno sequence preventing ribosome-binding, thus repressing translation. Its main target seems to be the major flagellin gene, while its function is anatagonized by FliW. The sequence is that of Translational regulator CsrA from Solidesulfovibrio magneticus (strain ATCC 700980 / DSM 13731 / RS-1) (Desulfovibrio magneticus).